Here is a 300-residue protein sequence, read N- to C-terminus: MLTSKHEFSLFLNTPAINSKSEKEVISEGPLTTSNEIDVTFSESFSSHLINLRRVPSVNSIIEQEKKGLTKISPSILNQNIAYKEKRQQLFSVLYEETVGYVSMDTLCIAISLLDRCFTVKPTIPTTSFKIYAIGCLFIAFKLTSDYSVAKKSFCENLAPSLSTKNLEKYEKIVLALLNFDIYVISLPSVESFLTPLIFQHVFFKSLPSESCDQMMVEWQYLLVEVMKDCQFIEYRPTEILCASFWVLLEIIWPSAFDFKPFQHLCSLPTNGSADETYIKHSNRFHDLIISIQRIADMLA.

The Cyclin N-terminal domain occupies 61 to 183 (IIEQEKKGLT…VLALLNFDIY (123 aa)).

This sequence belongs to the cyclin family. Cyclin AB subfamily.

It localises to the cytoplasm. It is found in the nucleus. Has a role in meiotic chromosome segregation. This is Meiosis-specific cyclin crs1 (crs1) from Schizosaccharomyces pombe (strain 972 / ATCC 24843) (Fission yeast).